A 170-amino-acid chain; its full sequence is Cilia- and flagella-associated protein 276 (170 aa).

2 disordered regions span residues 1–37 (MPLTRDPFQNPALDKDDSYLGKSRASKKLPYKNPTHL) and 151–170 (HTAATNGGYSRKNDGGFFST).

Microtubule inner protein component of sperm flagellar doublet microtubules. As to expression, expressed in trachea multiciliated cells.

It localises to the cytoplasm. Its subcellular location is the cytoskeleton. The protein localises to the cilium axoneme. The protein resides in the flagellum axoneme. Its function is as follows. Microtubule inner protein (MIP) part of the dynein-decorated doublet microtubules (DMTs) in cilia axoneme, which is required for motile cilia beating. May play an important role for the maintenance of myelin-axon integrity. May affect intracellular Ca(2+) homeostasis. In Bos taurus (Bovine), this protein is Cilia- and flagella-associated protein 276.